A 1079-amino-acid polypeptide reads, in one-letter code: Electrogenic sodium bicarbonate cotransporter 1 (1079 aa).

The required for interaction with AHCYL1 stretch occupies residues 1–62; that stretch reads MEDEAALDRG…EKKEKERVSE (62 aa). Over 1 to 466 the chain is Cytoplasmic; that stretch reads MEDEAALDRG…FASDFYDALN (466 aa). Phosphotyrosine is present on tyrosine 30. Basic residues predominate over residues 39 to 52; it reads YRRRRRHKRKAGHR. The tract at residues 39–78 is disordered; that stretch reads YRRRRRHKRKAGHREKKEKERVSENYSDKSDVENADESSS. Basic and acidic residues predominate over residues 53 to 70; that stretch reads EKKEKERVSENYSDKSDV. Residues serine 61, serine 65, serine 68, serine 223, serine 232, serine 233, and serine 245 each carry the phosphoserine modification. The segment at 238–265 is disordered; that stretch reads FTSPENGSPAMTHRNLTSSSLNDISDKP. Phosphothreonine occurs at positions 249 and 254. The span at 251–260 shows a compositional bias: polar residues; that stretch reads RNLTSSSLND. Residues serine 256, serine 257, and serine 262 each carry the phosphoserine modification. A helical membrane pass occupies residues 467–491; it reads IQALSAILFIYLATVTNAITFGGLL. The Extracellular portion of the chain corresponds to 492–501; sequence GDATDNMQGV. A helical membrane pass occupies residues 502 to 520; it reads LESFLGTAVSGAVFCLFAG. Position 521 (glutamine 521) is a topological domain, cytoplasmic. Residues 522 to 542 traverse the membrane as a discontinuously helical segment; it reads PLTILSSTGPVLVFERLLFNF. The Extracellular segment spans residues 543–550; that stretch reads SKDHNFDY. Residues 551 to 571 traverse the membrane as a helical segment; that stretch reads LEFRLWIGLWSAFLCLILVAT. Over 572-585 the chain is Cytoplasmic; it reads DASFLVQYFTRFTE. The helical transmembrane segment at 586 to 609 threads the bilayer; it reads EGFSSLISFIFIYDAFKKMIKLAD. Topologically, residues 610-692 are extracellular; sequence YYPINSNFKV…GNNCDFVPDI (83 aa). Residues 693–710 traverse the membrane as a helical segment; the sequence is TLMSFILFLGTYTSSMAL. Topologically, residues 711–725 are cytoplasmic; sequence KKFKTSRYFPTTARK. The chain crosses the membrane as a helical span at residues 726–745; sequence LISDFAIILSILIFCVIDAL. The Extracellular portion of the chain corresponds to 746–779; that stretch reads VGVDTPKLIVPSEFKPTSPNRGWFVPPFGGNPWW. Residues 748–779 are interaction with CA4; it reads VDTPKLIVPSEFKPTSPNRGWFVPPFGGNPWW. The helical transmembrane segment at 780–807 threads the bilayer; the sequence is VYLAAAIPALLVTILIFMDQQITAVIVN. The Cytoplasmic segment spans residues 808-819; the sequence is RKEHKLKKGAGY. A helical transmembrane segment spans residues 820-836; sequence HLDLFWVAILMVVCSFM. A topological domain (extracellular) is located at residue alanine 837. Residues 838-855 form a discontinuously helical membrane-spanning segment; the sequence is LPWYVAATVISIAHIDSL. Residues 856 to 877 are Cytoplasmic-facing; sequence KMETETSAPGEQPKFLGVREQR. A helical membrane pass occupies residues 878–894; it reads VTGTLVFILTGLSVFMA. Topologically, residues 895-901 are extracellular; sequence PILKFIP. Residues 902-918 form a helical membrane-spanning segment; that stretch reads MPVLYGVFLYMGVASLN. The Cytoplasmic portion of the chain corresponds to 919–960; the sequence is GVQFMDRLKLLLMPLKHQPDFIYLRHVPLRRVHLFTFLQVLC. The discontinuously helical intramembrane region spans 961 to 986; that stretch reads LALLWILKSTVAAIIFPVMILALVAV. The Cytoplasmic segment spans residues 987 to 1079; the sequence is RKGMDYLFSQ…PTFLERHTSC (93 aa). The interval 1002 to 1004 is CA2-binding; the sequence is LDD. The tract at residues 1012–1079 is disordered; the sequence is KKKEDEKKKK…PTFLERHTSC (68 aa). Phosphoserine; by PKA is present on serine 1026. Serine 1029 carries the post-translational modification Phosphoserine. The CA2-binding stretch occupies residues 1030 to 1033; the sequence is DSDD. A phosphoserine mark is found at serine 1034 and serine 1044. Residues 1057–1059 are required for basolateral targeting; it reads FLS. Over residues 1062–1079 the composition is skewed to basic and acidic residues; sequence KPSDRERSPTFLERHTSC. Position 1069 is a phosphoserine (serine 1069).

Belongs to the anion exchanger (TC 2.A.31) family. In terms of assembly, homodimer. Interacts with CA2/carbonic anhydrase 2 and CA4/carbonic anhydrase 4 which may regulate transporter activity. Isoform 1 but not isoform 2 interacts with AHCYL1 (via PEST domain when phosphorylated); the interaction increases SLC4A4 isoform 1 activity. Interacts with AHCYL2. In terms of processing, phosphorylation of Ser-1026 by PKA increases the binding of CA2 and changes the Na(+):HCO3(-) stoichiometry of the transporter from 3:1 to 2:1. Phosphorylated in presence of STK39 and dephosphorylated in presence of PP1 phosphatase; phosphorylation seems to inhibit SLC4A4 activity. N-glycosylated. May not be necessary for the transporter basic functions. In terms of tissue distribution, expressed in vas deferens epithelia (at protein level).

The protein localises to the basolateral cell membrane. The protein resides in the cell membrane. It catalyses the reaction 2 hydrogencarbonate(out) + Na(+)(out) = 2 hydrogencarbonate(in) + Na(+)(in). The enzyme catalyses 3 hydrogencarbonate(out) + Na(+)(out) = 3 hydrogencarbonate(in) + Na(+)(in). Functionally, electrogenic sodium/bicarbonate cotransporter with a Na(+):HCO3(-) stoichiometry varying from 1:2 to 1:3. May regulate bicarbonate influx/efflux at the basolateral membrane of cells and regulate intracellular pH. In Sus scrofa (Pig), this protein is Electrogenic sodium bicarbonate cotransporter 1 (SLC4A4).